Reading from the N-terminus, the 493-residue chain is Exosome complex component Rrp41 (493 aa).

Disordered stretches follow at residues 244–264 and 291–493; these read VSEE…PSPV and LASE…EKDE. The span at 249–259 shows a compositional bias: basic and acidic residues; that stretch reads APEKGAEKEVL. Residues 297 to 377 are compositionally biased toward acidic residues; sequence PDFEDELEEE…ALEEETELEA (81 aa). Residues 383–400 show a composition bias toward basic and acidic residues; it reads PELKEFDEIEARLEKEDA. Residues 401-471 are compositionally biased toward acidic residues; it reads SIEAEEEIEP…EAEEEPEEEK (71 aa). Residues 472–493 show a composition bias toward basic and acidic residues; that stretch reads SEGPWKVVKDPSEAGTRGEKDE.

This sequence belongs to the RNase PH family. Rrp41 subfamily. As to quaternary structure, component of the archaeal exosome complex. Forms a hexameric ring-like arrangement composed of 3 Rrp41-Rrp42 heterodimers. The hexameric ring associates with a trimer of Rrp4 and/or Csl4 subunits.

The protein localises to the cytoplasm. Functionally, catalytic component of the exosome, which is a complex involved in RNA degradation. Has 3'-&gt;5' exoribonuclease activity. Can also synthesize heteromeric RNA-tails. The chain is Exosome complex component Rrp41 from Methanosarcina mazei (strain ATCC BAA-159 / DSM 3647 / Goe1 / Go1 / JCM 11833 / OCM 88) (Methanosarcina frisia).